A 165-amino-acid polypeptide reads, in one-letter code: uncharacterized protein (165 aa).

Positions 8–159 constitute an N-acetyltransferase domain; that stretch reads LLVNYKTLEE…QGVQEQTTKP (152 aa).

This is an uncharacterized protein from Shouchella clausii (strain KSM-K16) (Alkalihalobacillus clausii).